A 438-amino-acid chain; its full sequence is Trigger factor (438 aa).

One can recognise a PPIase FKBP-type domain in the interval 163–248 (GDKLNIDFEG…VKRIETTEAR (86 aa)).

This sequence belongs to the FKBP-type PPIase family. Tig subfamily.

It localises to the cytoplasm. It catalyses the reaction [protein]-peptidylproline (omega=180) = [protein]-peptidylproline (omega=0). Functionally, involved in protein export. Acts as a chaperone by maintaining the newly synthesized protein in an open conformation. Functions as a peptidyl-prolyl cis-trans isomerase. The chain is Trigger factor from Syntrophomonas wolfei subsp. wolfei (strain DSM 2245B / Goettingen).